The following is a 113-amino-acid chain: DNA-directed RNA polymerase subunit omega (113 aa).

It belongs to the RNA polymerase subunit omega family. As to quaternary structure, the RNAP catalytic core consists of 2 alpha, 1 beta, 1 beta' and 1 omega subunit. When a sigma factor is associated with the core the holoenzyme is formed, which can initiate transcription.

It carries out the reaction RNA(n) + a ribonucleoside 5'-triphosphate = RNA(n+1) + diphosphate. Functionally, promotes RNA polymerase assembly. Latches the N- and C-terminal regions of the beta' subunit thereby facilitating its interaction with the beta and alpha subunits. The polypeptide is DNA-directed RNA polymerase subunit omega (Rhizorhabdus wittichii (strain DSM 6014 / CCUG 31198 / JCM 15750 / NBRC 105917 / EY 4224 / RW1) (Sphingomonas wittichii)).